The chain runs to 157 residues: Eukaryotic translation initiation factor 5A-2 (157 aa).

S2 carries the N-acetylserine modification. At S2 the chain carries Phosphoserine. Position 7 is a phosphothreonine (T7). The residue at position 51 (K51) is a Hypusine. S74 carries the post-translational modification Phosphoserine. A Glycyl lysine isopeptide (Lys-Gly) (interchain with G-Cter in ubiquitin) cross-link involves residue K86.

Belongs to the eIF-5A family. Homodimer. Binds to 80S ribosomes. Actively translating ribosomes show mutually exclusive binding of eIF5a (HYP2 or ANB1) and EFT1/eEF2. Interacts with DYS1 and LIA1. In terms of processing, lys-51 undergoes hypusination, a unique post-translational modification that consists in the addition of a butylamino group from spermidine to lysine side chain, leading to the formation of the unusual amino acid hypusine. eIF-5As are the only known proteins to undergo this modification, which is essential for their function.

It localises to the cytoplasm. Translation factor that promotes translation elongation and termination, particularly upon ribosome stalling at specific amino acid sequence contexts. Binds between the exit (E) and peptidyl (P) site of the ribosome and promotes rescue of stalled ribosome: specifically required for efficient translation of polyproline-containing peptides as well as other motifs that stall the ribosome. Acts as ribosome quality control (RQC) cofactor by joining the RQC complex to facilitate peptidyl transfer during CAT tailing step. Involved in actin dynamics and cell cycle progression, mRNA decay and probably in a pathway involved in stress response and maintenance of cell wall integrity. This chain is Eukaryotic translation initiation factor 5A-2 (ANB1), found in Saccharomyces cerevisiae (strain ATCC 204508 / S288c) (Baker's yeast).